Here is a 227-residue protein sequence, read N- to C-terminus: Uracil-DNA glycosylase (227 aa).

The active-site Proton acceptor is aspartate 65.

It belongs to the uracil-DNA glycosylase (UDG) superfamily. UNG family.

It localises to the cytoplasm. The enzyme catalyses Hydrolyzes single-stranded DNA or mismatched double-stranded DNA and polynucleotides, releasing free uracil.. Excises uracil residues from the DNA which can arise as a result of misincorporation of dUMP residues by DNA polymerase or due to deamination of cytosine. In Buchnera aphidicola subsp. Cinara cedri (strain Cc), this protein is Uracil-DNA glycosylase.